We begin with the raw amino-acid sequence, 360 residues long: Mitogen-activated protein kinase 14 (360 aa).

Ser-2 bears the N-acetylserine mark. Ser-2 is subject to Phosphoserine. Residue Thr-16 is modified to Phosphothreonine. A Protein kinase domain is found at 24–308 (YQNLSPVGSG…AAQALAHAYF (285 aa)). ATP contacts are provided by residues 30-38 (VGSGAYGSV) and Lys-53. N6-acetyllysine is present on Lys-53. Catalysis depends on Asp-150, which acts as the Proton acceptor. An N6-acetyllysine modification is found at Lys-152. Thr-180 is subject to Phosphothreonine; by MAP2K3, MAP2K4, MAP2K6 and autocatalysis. Tyr-182 is modified (phosphotyrosine; by MAP2K3, MAP2K4, MAP2K6 and autocatalysis). Residue Thr-263 is modified to Phosphothreonine. Tyr-323 carries the post-translational modification Phosphotyrosine; by ZAP70.

The protein belongs to the protein kinase superfamily. CMGC Ser/Thr protein kinase family. MAP kinase subfamily. As to quaternary structure, component of a signaling complex containing at least AKAP13, PKN1, MAPK14, ZAK and MAP2K3. Within this complex, AKAP13 interacts directly with PKN1, which in turn recruits MAPK14, MAP2K3 and ZAK. Binds to a kinase interaction motif within the protein tyrosine phosphatase, PTPRR. This interaction retains MAPK14 in the cytoplasm and prevents nuclear accumulation. Interacts with SPAG9 and GADD45A. Interacts with CDC25B, CDC25C, DUSP1, DUSP10, DUSP16, NP60, SUPT20H and TAB1. Interacts with casein kinase II subunits CSNK2A1 and CSNK2B. Interacts with PPM1D. Interacts with CDK5RAP3; recruits PPM1D to MAPK14 and may regulate its dephosphorylation. Interacts with DUSP2; this interaction does not lead to catalytic activation of DUSP2 and dephosphrylation of MAPK14. Mg(2+) is required as a cofactor. Dually phosphorylated on Thr-180 and Tyr-182 by the MAP2Ks MAP2K3/MKK3, MAP2K4/MKK4 and MAP2K6/MKK6 in response to inflammatory cytokines, environmental stress or growth factors, which activates the enzyme. Dual phosphorylation can also be mediated by TAB1-mediated autophosphorylation. TCR engagement in T-cells also leads to Tyr-323 phosphorylation by ZAP70. Dephosphorylated and inactivated by DUPS1, DUSP10 and DUSP16. PPM1D also mediates dephosphorylation and inactivation of MAPK14. Post-translationally, acetylated at Lys-53 and Lys-152 by KAT2B and EP300. Acetylation at Lys-53 increases the affinity for ATP and enhances kinase activity. Lys-53 and Lys-152 are deacetylated by HDAC3. In terms of processing, ubiquitinated. Ubiquitination leads to degradation by the proteasome pathway.

The protein localises to the cytoplasm. It is found in the nucleus. It carries out the reaction L-seryl-[protein] + ATP = O-phospho-L-seryl-[protein] + ADP + H(+). The enzyme catalyses L-threonyl-[protein] + ATP = O-phospho-L-threonyl-[protein] + ADP + H(+). Its activity is regulated as follows. Activated by cell stresses such as DNA damage, heat shock, osmotic shock, anisomycin and sodium arsenite, as well as pro-inflammatory stimuli such as bacterial lipopolysaccharide (LPS) and interleukin-1. Activation occurs through dual phosphorylation of Thr-180 and Tyr-182 by either of two dual specificity kinases, MAP2K3/MKK3 or MAP2K6/MKK6, and potentially also MAP2K4/MKK4, as well as by TAB1-mediated autophosphorylation. MAPK14 phosphorylated on both Thr-180 and Tyr-182 is 10-20-fold more active than MAPK14 phosphorylated only on Thr-180, whereas MAPK14 phosphorylated on Tyr-182 alone is inactive. whereas Thr-180 is necessary for catalysis, Tyr-182 may be required for auto-activation and substrate recognition. Phosphorylated at Tyr-323 by ZAP70 in an alternative activation pathway in response to TCR signaling in T-cells. This alternative pathway is inhibited by GADD45A. Inhibited by dual specificity phosphatases, such as DUSP1, DUSP10, and DUSP16. Specifically inhibited by the binding of pyridinyl-imidazole compounds, which are cytokine-suppressive anti-inflammatory drugs (CSAID). SB203580 is an inhibitor of MAPK14. In terms of biological role, serine/threonine kinase which acts as an essential component of the MAP kinase signal transduction pathway. MAPK14 is one of the four p38 MAPKs which play an important role in the cascades of cellular responses evoked by extracellular stimuli such as pro-inflammatory cytokines or physical stress leading to direct activation of transcription factors. Accordingly, p38 MAPKs phosphorylate a broad range of proteins and it has been estimated that they may have approximately 200 to 300 substrates each. Some of the targets are downstream kinases which are activated through phosphorylation and further phosphorylate additional targets. RPS6KA5/MSK1 and RPS6KA4/MSK2 can directly phosphorylate and activate transcription factors such as CREB1, ATF1, the NF-kappa-B isoform RELA/NFKB3, STAT1 and STAT3, but can also phosphorylate histone H3 and the nucleosomal protein HMGN1. RPS6KA5/MSK1 and RPS6KA4/MSK2 play important roles in the rapid induction of immediate-early genes in response to stress or mitogenic stimuli, either by inducing chromatin remodeling or by recruiting the transcription machinery. On the other hand, two other kinase targets, MAPKAPK2/MK2 and MAPKAPK3/MK3, participate in the control of gene expression mostly at the post-transcriptional level, by phosphorylating ZFP36 (tristetraprolin) and ELAVL1, and by regulating EEF2K, which is important for the elongation of mRNA during translation. MKNK1/MNK1 and MKNK2/MNK2, two other kinases activated by p38 MAPKs, regulate protein synthesis by phosphorylating the initiation factor EIF4E2. MAPK14 also interacts with casein kinase II, leading to its activation through autophosphorylation and further phosphorylation of TP53/p53. In the cytoplasm, the p38 MAPK pathway is an important regulator of protein turnover. For example, CFLAR is an inhibitor of TNF-induced apoptosis whose proteasome-mediated degradation is regulated by p38 MAPK phosphorylation. In a similar way, MAPK14 phosphorylates the ubiquitin ligase SIAH2, regulating its activity towards EGLN3. MAPK14 may also inhibit the lysosomal degradation pathway of autophagy by interfering with the intracellular trafficking of the transmembrane protein ATG9. Another function of MAPK14 is to regulate the endocytosis of membrane receptors by different mechanisms that impinge on the small GTPase RAB5A. In addition, clathrin-mediated EGFR internalization induced by inflammatory cytokines and UV irradiation depends on MAPK14-mediated phosphorylation of EGFR itself as well as of RAB5A effectors. Ectodomain shedding of transmembrane proteins is regulated by p38 MAPKs as well. In response to inflammatory stimuli, p38 MAPKs phosphorylate the membrane-associated metalloprotease ADAM17. Such phosphorylation is required for ADAM17-mediated ectodomain shedding of TGF-alpha family ligands, which results in the activation of EGFR signaling and cell proliferation. Another p38 MAPK substrate is FGFR1. FGFR1 can be translocated from the extracellular space into the cytosol and nucleus of target cells, and regulates processes such as rRNA synthesis and cell growth. FGFR1 translocation requires p38 MAPK activation. In the nucleus, many transcription factors are phosphorylated and activated by p38 MAPKs in response to different stimuli. Classical examples include ATF1, ATF2, ATF6, ELK1, PTPRH, DDIT3, TP53/p53 and MEF2C and MEF2A. The p38 MAPKs are emerging as important modulators of gene expression by regulating chromatin modifiers and remodelers. The promoters of several genes involved in the inflammatory response, such as IL6, IL8 and IL12B, display a p38 MAPK-dependent enrichment of histone H3 phosphorylation on 'Ser-10' (H3S10ph) in LPS-stimulated myeloid cells. This phosphorylation enhances the accessibility of the cryptic NF-kappa-B-binding sites marking promoters for increased NF-kappa-B recruitment. Phosphorylates CDC25B and CDC25C which is required for binding to 14-3-3 proteins and leads to initiation of a G2 delay after ultraviolet radiation. Phosphorylates TIAR following DNA damage, releasing TIAR from GADD45A mRNA and preventing mRNA degradation. The p38 MAPKs may also have kinase-independent roles, which are thought to be due to the binding to targets in the absence of phosphorylation. Protein O-Glc-N-acylation catalyzed by the OGT is regulated by MAPK14, and, although OGT does not seem to be phosphorylated by MAPK14, their interaction increases upon MAPK14 activation induced by glucose deprivation. This interaction may regulate OGT activity by recruiting it to specific targets such as neurofilament H, stimulating its O-Glc-N-acylation. Required in mid-fetal development for the growth of embryo-derived blood vessels in the labyrinth layer of the placenta. Also plays an essential role in developmental and stress-induced erythropoiesis, through regulation of EPO gene expression. Phosphorylates S100A9 at 'Thr-113'. In Pan troglodytes (Chimpanzee), this protein is Mitogen-activated protein kinase 14.